We begin with the raw amino-acid sequence, 414 residues long: Protein FAM81B (414 aa).

Positions 1 to 13 (MTSETDINKSASP) are enriched in polar residues. Residues 1 to 43 (MTSETDINKSASPTAAAKEQPEEPDGPLPGSASEQEKKVRFSP) form a disordered region. Coiled coils occupy residues 70 to 94 (NTQRSQLEDRLNNQDRTIAFLLEQA), 121 to 149 (LLENHIQTITSIVKKLSQNIEMIEEQIKA), 188 to 223 (KLSGDIHFIRNEHQQLEKTIQEMISSLQTVSKNLDT), and 266 to 414 (LNLY…LQES).

It belongs to the FAM81 family.

This Bos taurus (Bovine) protein is Protein FAM81B (FAM81B).